Here is a 258-residue protein sequence, read N- to C-terminus: 3-deoxy-manno-octulosonate cytidylyltransferase (258 aa).

It belongs to the KdsB family.

It localises to the cytoplasm. It catalyses the reaction 3-deoxy-alpha-D-manno-oct-2-ulosonate + CTP = CMP-3-deoxy-beta-D-manno-octulosonate + diphosphate. It functions in the pathway nucleotide-sugar biosynthesis; CMP-3-deoxy-D-manno-octulosonate biosynthesis; CMP-3-deoxy-D-manno-octulosonate from 3-deoxy-D-manno-octulosonate and CTP: step 1/1. It participates in bacterial outer membrane biogenesis; lipopolysaccharide biosynthesis. Activates KDO (a required 8-carbon sugar) for incorporation into bacterial lipopolysaccharide in Gram-negative bacteria. In Gemmatimonas aurantiaca (strain DSM 14586 / JCM 11422 / NBRC 100505 / T-27), this protein is 3-deoxy-manno-octulosonate cytidylyltransferase.